We begin with the raw amino-acid sequence, 488 residues long: 1-hydroxycarotenoid 3,4-desaturase (488 aa).

FAD-binding positions include Glu-31, Lys-39, 55–56 (SL), Val-247, Asn-275, Leu-431, Gly-461, and 468–469 (GI).

It belongs to the carotenoid/retinoid oxidoreductase family. As to quaternary structure, monomer.

The catalysed reaction is rhodopin + A = (3E)-3,4-didehydrorhodopin + AH2. It catalyses the reaction 1'-hydroxy-gamma-carotene + A = 1'-hydroxytorulene + AH2. The enzyme catalyses 1-hydroxy-all-trans-1,2-dihydro-neurosporene + A = demethylspheroidene + AH2. It carries out the reaction 1,1'-dihydroxy-1,1',2,2'-tetrahydroneurosporene + A = 1'-hydroxy-demethylspheroidene + AH2. The catalysed reaction is 1,1'-dihydroxy-1,1',2,2'-tetrahydrolycopene + A = 1,1'-dihydroxy-3,4-didehydro-1,2-dihydrolycopene + AH2. The protein operates within carotenoid biosynthesis. Catalyzes the introduction of a C-3,4 double bond into 1'-hydroxy-gamma-carotene and rhodopin (1-hydroxylycopene) to yield 1'-hydroxytorulene and (3E)-3,4-didehydrorhodopin, respectively. Can also 1-hydroxy-all-trans-1,2-dihydro-neurosporene, 1,1'-dihydroxy-1,1',2,2'-tetrahydroneurosporene and 1,1'-dihydroxy-1,1',2,2'-tetrahydrolycopene. Probably involved in the synthesis of myxol, a gamma-carotene derivative. May use FAD as a proton acceptor. This Flavobacterium sp. (strain P99-3) protein is 1-hydroxycarotenoid 3,4-desaturase.